The chain runs to 277 residues: Alternative cytochrome c oxidase subunit 2 (277 aa).

The Periplasmic portion of the chain corresponds to 1 to 40 (MAVALILLLIAIGSVLFHLFSPWWWTPIATNWGYIDDTIN). A helical membrane pass occupies residues 41-61 (ITFWITGFVFTAVILFMAYCV). Over 62–83 (FRFHHKEGRQAAYNPENKKLEW) the chain is Cytoplasmic. Residues 84–104 (WLSVGTGVGVAAMLAPGLVVW) traverse the membrane as a helical segment. At 105 to 277 (HQFVTVPADA…VRAKYNSGDD (173 aa)) the chain is on the periplasmic side. 4 residues coordinate Cu cation: His190, Cys225, Cys229, and His233.

It belongs to the cytochrome c oxidase subunit 2 family.

The protein resides in the cell membrane. It catalyses the reaction 4 Fe(II)-[cytochrome c] + O2 + 8 H(+)(in) = 4 Fe(III)-[cytochrome c] + 2 H2O + 4 H(+)(out). Cytochrome c oxidase is the component of the respiratory chain that catalyzes the reduction of oxygen to water. Subunits 1-3 form the functional core of the enzyme complex. Subunit 2 transfers the electrons from cytochrome c via its binuclear copper A center to the bimetallic center of the catalytic subunit 1. The protein is Alternative cytochrome c oxidase subunit 2 (coxM) of Bradyrhizobium diazoefficiens (strain JCM 10833 / BCRC 13528 / IAM 13628 / NBRC 14792 / USDA 110).